The primary structure comprises 171 residues: uncharacterized protein (171 aa).

The interval 56–83 (TVGVNKNAKNGPTQSQTRSGSAGAQARM) is disordered. Residues 57–77 (VGVNKNAKNGPTQSQTRSGSA) are compositionally biased toward polar residues. Positions 113 to 170 (KAFETLGLGASATTADIKAAYKDLVKKHHPDANGGDRGSEERFRAVIQAYQLLKQAGF) constitute a J domain.

This is an uncharacterized protein from Sinorhizobium sp.